The following is a 248-amino-acid chain: MSFVVIIPARFSSTRLPGKPLVDINGKPMIVHVLERARESGAERIIVATDHEDVARAVEAAGGEVCMTRADHQSGTERLAEVVEKCGFTDDTVIVNVQGDEPMIPAVIIRQVAENLAQRQVGMATLAVPIHSAEEAFNPNAVKVVLDAEGYALYFSRATIPWDRDRFAKSLETVGDTCLRHLGIYGYRAGFIRRYVSWQPSPLEHIEMLEQLRVLWYGEKIHVAVAKAVPGTGVDTADDLERVRAEMR.

This sequence belongs to the KdsB family.

It localises to the cytoplasm. It carries out the reaction 3-deoxy-alpha-D-manno-oct-2-ulosonate + CTP = CMP-3-deoxy-beta-D-manno-octulosonate + diphosphate. Its pathway is nucleotide-sugar biosynthesis; CMP-3-deoxy-D-manno-octulosonate biosynthesis; CMP-3-deoxy-D-manno-octulosonate from 3-deoxy-D-manno-octulosonate and CTP: step 1/1. It functions in the pathway bacterial outer membrane biogenesis; lipopolysaccharide biosynthesis. Functionally, activates KDO (a required 8-carbon sugar) for incorporation into bacterial lipopolysaccharide in Gram-negative bacteria. The polypeptide is 3-deoxy-manno-octulosonate cytidylyltransferase (Salmonella typhi).